The chain runs to 291 residues: MGHCRINGKTQVCGLFGFPVEHSFSPAMHNAAFQQLDLNWTYVPFRVHPDNLKQAVTGIFSLNMAGVNVTVPHKQRVMPFLDELEPAARIIGAVNTIVNNNGKLVGYNTDGKGFVRALTEEARFNPLGKSAILIGAGGAARAVAVQLALSGLRTIYITNRNQEKAEELARDILESTDTSASMIPWGNNLLGKRMVEVDLVVQATPLGMSPEVDQVPEFPFQMLTPQHLVCDLIYNPEQTCFLRRAKSRGSKTMNGLAMLLYQGVLAFELWTGFTAPVDVMRNVLHKQVAKG.

Residues 23–25 (SFS) and Thr-70 contribute to the shikimate site. Catalysis depends on Lys-74, which acts as the Proton acceptor. The shikimate site is built by Asn-95 and Asp-110. NADP(+)-binding positions include 135–139 (GAGGA) and Leu-232. Tyr-234 contacts shikimate. NADP(+) is bound at residue Gly-255.

It belongs to the shikimate dehydrogenase family. In terms of assembly, homodimer.

The catalysed reaction is shikimate + NADP(+) = 3-dehydroshikimate + NADPH + H(+). It participates in metabolic intermediate biosynthesis; chorismate biosynthesis; chorismate from D-erythrose 4-phosphate and phosphoenolpyruvate: step 4/7. In terms of biological role, involved in the biosynthesis of the chorismate, which leads to the biosynthesis of aromatic amino acids. Catalyzes the reversible NADPH linked reduction of 3-dehydroshikimate (DHSA) to yield shikimate (SA). In Desulforamulus reducens (strain ATCC BAA-1160 / DSM 100696 / MI-1) (Desulfotomaculum reducens), this protein is Shikimate dehydrogenase (NADP(+)).